Here is an 825-residue protein sequence, read N- to C-terminus: Extracellular exo-alpha-L-arabinofuranosidase (825 aa).

Positions 1 to 29 (MSRIRWRYGTAATALLVAAGLVPTATAHA) are cleaved as a signal peptide. An alpha-L-arabinofuranose-binding site is contributed by E58. The CBM-cenC domain occupies 70–215 (AELVQNRSFE…ALDMVSLFPR (146 aa)). Alpha-L-arabinofuranose-binding positions include C247 and 379–380 (NE). The active-site Proton donor/acceptor is E380.

Belongs to the glycosyl hydrolase 51 family.

The protein resides in the secreted. The enzyme catalyses Hydrolysis of terminal non-reducing alpha-L-arabinofuranoside residues in alpha-L-arabinosides.. Involved in the degradation of arabinan and is a key enzyme in the complete degradation of the plant cell wall. Catalyzes the cleavage of terminal alpha-L-arabinofuranosyl residues of arabinan present in the arabinofuranosyl polysaccharides or oligosaccharides. It cannot act on other arabinose-containing polysaccharides and arabinoxylo-oligosaccharides. It leaves most of the polymer intact, including most of the main-chain residues and the arabinose side chains. It acts preferentially on the linear alpha-(1-&gt;2)-linked arabinofuranobiosides and alpha-(1-&gt;3)-linked arabinofuranobiosides, and is much less effective on alpha-(1-&gt;5)-linked arabinofuranobiosides. It also hydrolyzes the terminal alpha-(1-&gt;3)-linked arabinofuranotriosides in preference to the alpha-(1-&gt;5)-linked arabinofuranotriosides. This Streptomyces chartreusis protein is Extracellular exo-alpha-L-arabinofuranosidase.